We begin with the raw amino-acid sequence, 429 residues long: Histidine--tRNA ligase (429 aa).

This sequence belongs to the class-II aminoacyl-tRNA synthetase family. As to quaternary structure, homodimer.

It localises to the cytoplasm. It catalyses the reaction tRNA(His) + L-histidine + ATP = L-histidyl-tRNA(His) + AMP + diphosphate + H(+). This Chlorobium phaeobacteroides (strain DSM 266 / SMG 266 / 2430) protein is Histidine--tRNA ligase.